The chain runs to 301 residues: Rhodopsin (301 aa).

Residues Leu1–Met18 are Extracellular-facing. The chain crosses the membrane as a helical span at residues Tyr19–Val43. Residues Phe44–Asn55 are Cytoplasmic-facing. The helical transmembrane segment at Leu56–Val78 threads the bilayer. At Thr79 to Cys92 the chain is on the extracellular side. Cysteines 92 and 169 form a disulfide. The helical transmembrane segment at Gln93–Phe115 threads the bilayer. The 'Ionic lock' involved in activated form stabilization motif lies at Asp116–Tyr118. The Cytoplasmic portion of the chain corresponds to Asp116 to Lys134. The helical transmembrane segment at Ala135–Phe155 threads the bilayer. Over Gly156–Ser182 the chain is Extracellular. Asn165 carries N-linked (GlcNAc...) asparagine glycosylation. Residues Tyr183–Val204 traverse the membrane as a helical segment. Over Phe205–Lys245 the chain is Cytoplasmic. The chain crosses the membrane as a helical span at residues Ile246–Val267. The Extracellular segment spans residues Gly268–Val278. A helical transmembrane segment spans residues Tyr279–Ile300. At Lys288 the chain carries N6-(retinylidene)lysine.

This sequence belongs to the G-protein coupled receptor 1 family. Opsin subfamily. Homodimer. Interacts with GNAQ. Contains one covalently linked retinal chromophore.

It localises to the cell projection. The protein localises to the rhabdomere membrane. Its function is as follows. Photoreceptor required for image-forming vision at low light intensity. Can use both retinal and 3-dehydroretinal as visual pigment. Light-induced isomerization of 11-cis to all-trans retinal triggers a conformational change that activates signaling via G-proteins. Signaling via GNAQ probably mediates the activation of phospholipase C. In Procambarus milleri (Miami cave crayfish), this protein is Rhodopsin (RHO).